A 706-amino-acid polypeptide reads, in one-letter code: Lysophospholipase 2 (706 aa).

An N-terminal signal peptide occupies residues 1–19 (MQLRNILQASSLISGLSLA). A PLA2c domain is found at 36–588 (PCPSDDTSLV…ADYCWNGTLS (553 aa)). N-linked (GlcNAc...) asparagine glycosylation is found at N47, N80, N94, N125, N162, N181, N193, N217, N279, N309, N365, N390, N491, N515, N524, N543, N567, N584, N598, N630, N634, N642, N648, N652, and N658. A disordered region spans residues 627–672 (TSGNTTSNSTTSTSSNVTSNSNSSSNTTLNSNSSSSSISSSTARSS). A lipid anchor (GPI-anchor amidated asparagine) is attached at N680. Residues 681 to 706 (AAAISYANTNTLMSLLGAITALFGLI) constitute a propeptide, removed in mature form.

The protein belongs to the lysophospholipase family. The GPI-anchor is attached to the protein in the endoplasmic reticulum and serves to target the protein to the cell surface. There, the glucosamine-inositol phospholipid moiety is cleaved off and the GPI-modified mannoprotein is covalently attached via its lipidless GPI glycan remnant to the 1,6-beta-glucan of the outer cell wall layer.

Its subcellular location is the secreted. The protein localises to the cell wall. It localises to the membrane. It catalyses the reaction a 1-acyl-sn-glycero-3-phosphocholine + H2O = sn-glycerol 3-phosphocholine + a fatty acid + H(+). It carries out the reaction 1-hexadecanoyl-sn-glycero-3-phosphoethanolamine + H2O = sn-glycero-3-phosphoethanolamine + hexadecanoate + H(+). The enzyme catalyses 1-hexadecanoyl-sn-glycero-3-phosphocholine + H2O = sn-glycerol 3-phosphocholine + hexadecanoate + H(+). The catalysed reaction is 1-hexadecanoyl-sn-glycero-3-phospho-L-serine + H2O = sn-glycero-3-phospho-L-serine + hexadecanoate + H(+). It catalyses the reaction 1,2-dihexadecanoyl-sn-glycero-3-phosphocholine + H2O = 1-hexadecanoyl-sn-glycero-3-phosphocholine + hexadecanoate + H(+). Its function is as follows. Sequentially removes both fatty acyl groups from diacylglycerophospholipids and therefore has both phospholipase A and lysophospholipase activities. However, it does not display transacylase activity. Substrate preference is phosphatidylserine &gt; phosphatidylinositol &gt; phosphatidylcholine &gt; phosphatidylethanolamine. The substrate specificity is pH- and ion-dependent. In contrast with activities observed at optimum pH 3.5, the order of substrate preference at pH 5.5 is phosphatidylserine = phosphatidylethanolamine &gt; phosphatidylcholine &gt; phosphatidylinositol. In Saccharomyces cerevisiae (strain ATCC 204508 / S288c) (Baker's yeast), this protein is Lysophospholipase 2 (PLB2).